Consider the following 1220-residue polypeptide: DNA polymerase catalytic subunit (1220 aa).

Disordered stretches follow at residues 21–43 (GKRP…RPPQ) and 641–691 (QADA…KPGV). Polar residues predominate over residues 646–660 (SETSELAMDSQSHAF).

The protein belongs to the DNA polymerase type-B family. In terms of assembly, forms a complex with the ssDNA-binding protein, the DNA polymerase processivity factor, and the alkaline exonuclease. Interacts with the helicase-primase complex composed of the primase, the helicase and the primase-associated factor; this interaction may coordinate leading and lagging strand DNA synthesis at the replication fork.

It is found in the host nucleus. The enzyme catalyses DNA(n) + a 2'-deoxyribonucleoside 5'-triphosphate = DNA(n+1) + diphosphate. It carries out the reaction Endonucleolytic cleavage to 5'-phosphomonoester.. In terms of biological role, replicates viral genomic DNA. The replication complex is composed of six viral proteins: the DNA polymerase, processivity factor, primase, primase-associated factor, helicase, and ssDNA-binding protein. Additionally, the polymerase contains an intrinsic ribonuclease H (RNase H) activity that specifically degrades RNA/DNA heteroduplexes or duplex DNA substrates in the 5' to 3' direction. Therefore, it can catalyze the excision of the RNA primers that initiate the synthesis of Okazaki fragments at a replication fork during viral DNA replication. In Equine herpesvirus 1 (strain Ab4p) (EHV-1), this protein is DNA polymerase catalytic subunit.